The sequence spans 385 residues: Calcium/calmodulin-dependent protein kinase type 1D (385 aa).

The Protein kinase domain maps to 23-279 (FEFKETLGTG…CEQAARHPWI (257 aa)). Residues 29–37 (LGTGAFSEV) and lysine 52 contribute to the ATP site. A Glycyl lysine isopeptide (Lys-Gly) (interchain with G-Cter in SUMO2) cross-link involves residue lysine 113. Serine 122 carries the phosphoserine modification. Aspartate 144 serves as the catalytic Proton acceptor. Threonine 180 is modified (phosphothreonine; by CaMKK1 and CaMKK2). An autoinhibitory domain region spans residues 279 to 319 (IAGDTALNKNIHESVSAQIRKNFAKSKWRQAFNATAVVRHM). The calmodulin-binding stretch occupies residues 299–320 (KNFAKSKWRQAFNATAVVRHMR). Residues 318 to 324 (HMRKLHL) carry the Nuclear export signal motif. The interval 360–385 (SSGVSGVGAERRPRPTTVTAVHSGSK) is disordered. Positions 375 to 385 (TTVTAVHSGSK) are enriched in polar residues.

The protein belongs to the protein kinase superfamily. CAMK Ser/Thr protein kinase family. CaMK subfamily. In terms of tissue distribution, widely expressed. Highly and mostly expressed in polymorphonuclear leukocytes (neutrophilic and eosinophilic granulocytes) while little or no expression is observed in monocytes and lymphocytes.

The protein localises to the cytoplasm. It localises to the nucleus. It carries out the reaction L-seryl-[protein] + ATP = O-phospho-L-seryl-[protein] + ADP + H(+). The catalysed reaction is L-threonyl-[protein] + ATP = O-phospho-L-threonyl-[protein] + ADP + H(+). Activated by Ca(2+)/calmodulin. Binding of calmodulin results in conformational change that relieves intrasteric autoinhibition and allows phosphorylation of Thr-180 within the activation loop by CaMKK1 or CaMKK2. Phosphorylation of Thr-180 results in several fold increase in total activity. Unlike CaMK4, may be unable to exhibit autonomous activity after Ca(2+)/calmodulin activation. Its function is as follows. Calcium/calmodulin-dependent protein kinase that operates in the calcium-triggered CaMKK-CaMK1 signaling cascade and, upon calcium influx, activates CREB-dependent gene transcription, regulates calcium-mediated granulocyte function and respiratory burst and promotes basal dendritic growth of hippocampal neurons. In neutrophil cells, required for cytokine-induced proliferative responses and activation of the respiratory burst. Activates the transcription factor CREB1 in hippocampal neuron nuclei. May play a role in apoptosis of erythroleukemia cells. In vitro, phosphorylates transcription factor CREM isoform Beta. The polypeptide is Calcium/calmodulin-dependent protein kinase type 1D (CAMK1D) (Homo sapiens (Human)).